The primary structure comprises 200 residues: Holliday junction branch migration complex subunit RuvA (200 aa).

Positions 1–64 (MIGHLRGIIV…EDAHTLYGFH (64 aa)) are domain I. Positions 65–143 (NDHERRLFRA…RWHTNDTPSP (79 aa)) are domain II. The tract at residues 133–152 (SRWHTNDTPSPEGLRSSNTQ) is disordered. The segment at 144–148 (EGLRS) is flexible linker. The domain III stretch occupies residues 149–200 (SNTQPTQDAISALMALGYKPQEAKRAIDAIQKPDLSAETLIRLALKQMVLGT).

This sequence belongs to the RuvA family. In terms of assembly, homotetramer. Forms an RuvA(8)-RuvB(12)-Holliday junction (HJ) complex. HJ DNA is sandwiched between 2 RuvA tetramers; dsDNA enters through RuvA and exits via RuvB. An RuvB hexamer assembles on each DNA strand where it exits the tetramer. Each RuvB hexamer is contacted by two RuvA subunits (via domain III) on 2 adjacent RuvB subunits; this complex drives branch migration. In the full resolvosome a probable DNA-RuvA(4)-RuvB(12)-RuvC(2) complex forms which resolves the HJ.

It localises to the cytoplasm. Its function is as follows. The RuvA-RuvB-RuvC complex processes Holliday junction (HJ) DNA during genetic recombination and DNA repair, while the RuvA-RuvB complex plays an important role in the rescue of blocked DNA replication forks via replication fork reversal (RFR). RuvA specifically binds to HJ cruciform DNA, conferring on it an open structure. The RuvB hexamer acts as an ATP-dependent pump, pulling dsDNA into and through the RuvAB complex. HJ branch migration allows RuvC to scan DNA until it finds its consensus sequence, where it cleaves and resolves the cruciform DNA. The chain is Holliday junction branch migration complex subunit RuvA from Coxiella burnetii (strain Dugway 5J108-111).